A 301-amino-acid polypeptide reads, in one-letter code: GTPase Era (301 aa).

In terms of domain architecture, Era-type G spans 7–175 (YCGFIAIVGR…AAIVRKHLPE (169 aa)). Positions 15 to 22 (GRPNVGKS) are G1. 15 to 22 (GRPNVGKS) is a GTP binding site. The tract at residues 41–45 (QTTRH) is G2. The tract at residues 62–65 (DTPG) is G3. GTP contacts are provided by residues 62–66 (DTPGL) and 124–127 (NKVD). The segment at 124-127 (NKVD) is G4. Positions 154 to 156 (ISA) are G5. Residues 206 to 283 (LGAELPYSVT…HLELWVKVKS (78 aa)) enclose the KH type-2 domain.

It belongs to the TRAFAC class TrmE-Era-EngA-EngB-Septin-like GTPase superfamily. Era GTPase family. As to quaternary structure, monomer.

It is found in the cytoplasm. Its subcellular location is the cell inner membrane. An essential GTPase that binds both GDP and GTP, with rapid nucleotide exchange. Plays a role in 16S rRNA processing and 30S ribosomal subunit biogenesis and possibly also in cell cycle regulation and energy metabolism. The sequence is that of GTPase Era from Escherichia coli O1:K1 / APEC.